Here is a 1467-residue protein sequence, read N- to C-terminus: Gag-Pol polyprotein (1467 aa).

Gly2 carries the N-myristoyl glycine; by host lipid modification. A Nuclear export signal motif is present at residues 16–22 (FEHIRLR). A Nuclear localization signal motif is present at residues 26–32 (KKKYQIK). The segment at 116–144 (NAERNTTETSSGQKKNDKGVTVPPGGSQN) is disordered. 2 CCHC-type zinc fingers span residues 402-419 (VKCYNCGKFGHMQRQCPE) and 423-440 (MRCLKCGKPGHLAKDCRG). Residues 535-606 (IKALLDTGAD…TPINIIGRNL (72 aa)) enclose the Peptidase A2 domain. Residue Asp540 is the For protease activity; shared with dimeric partner of the active site. Positions 662 to 852 (EGKISRVGGE…PPYEWMGYKL (191 aa)) constitute a Reverse transcriptase domain. Residues Asp728, Asp803, and Asp804 each coordinate Mg(2+). The RT 'primer grip' stretch occupies residues 845 to 853 (YEWMGYKLW). A Tryptophan repeat motif motif is present at residues 1015 to 1031 (WEQWWADYWQVSWIPEW). The RNase H type-1 domain maps to 1050 to 1173 (PIPKEDVYYV…IDKLVSKGIR (124 aa)). Asp1114 and Asp1165 together coordinate Mg(2+). The segment at 1179–1220 (EKIEEAQEKHERYHNNWKNLADTYGLPQIVAKEIVAMCPKCQ) adopts an Integrase-type zinc-finger fold. Zn(2+) is bound by residues His1188, His1192, Cys1216, and Cys1219. Residues 1230–1380 (VDASPGTWQM…TSAERLINII (151 aa)) enclose the Integrase catalytic domain. Asp1240 and Asp1292 together coordinate Mg(2+). A DNA-binding region (integrase-type) is located at residues 1399 to 1446 (FRVYYREGRDPVWKGPAQLIWKGEGAVVLKDGSDLKVVPRRKAKIIKD). Residues 1447-1467 (YEPKQRVGNEGDVEGTRGSDN) form a disordered region.

In terms of assembly, homotrimer. Interacts with gp41 (via C-terminus). Homodimer. The active site consists of two apposed aspartic acid residues. As to quaternary structure, heterodimer of p66 RT and p51 RT (RT p66/p51). Heterodimerization of RT is essential for DNA polymerase activity. Despite the sequence identities, p66 RT and p51 RT have distinct folding. In terms of assembly, homotetramer; may further associate as a homohexadecamer. The cofactor is Mg(2+). Specific enzymatic cleavages by the viral protease yield mature proteins. The protease is released by autocatalytic cleavage. The polyprotein is cleaved during and after budding, this process is termed maturation. Proteolytic cleavage of p66 RT removes the RNase H domain to yield the p51 RT subunit. In terms of processing, capsid protein p24 is phosphorylated.

It localises to the virion. It is found in the host nucleus. The protein localises to the host cytoplasm. Its subcellular location is the host cell membrane. It carries out the reaction Specific for a P1 residue that is hydrophobic, and P1' variable, but often Pro.. The enzyme catalyses Endohydrolysis of RNA in RNA/DNA hybrids. Three different cleavage modes: 1. sequence-specific internal cleavage of RNA. Human immunodeficiency virus type 1 and Moloney murine leukemia virus enzymes prefer to cleave the RNA strand one nucleotide away from the RNA-DNA junction. 2. RNA 5'-end directed cleavage 13-19 nucleotides from the RNA end. 3. DNA 3'-end directed cleavage 15-20 nucleotides away from the primer terminus.. It catalyses the reaction 3'-end directed exonucleolytic cleavage of viral RNA-DNA hybrid.. The catalysed reaction is DNA(n) + a 2'-deoxyribonucleoside 5'-triphosphate = DNA(n+1) + diphosphate. With respect to regulation, the viral protease is inhibited by many synthetic protease inhibitors (PIs), such as amprenavir, atazanavir, indinavir, loprinavir, nelfinavir, ritonavir and saquinavir. RT can be inhibited either by nucleoside RT inhibitors (NRTIs) or by non nucleoside RT inhibitors (NNRTIs). NRTIs act as chain terminators, whereas NNRTIs inhibit DNA polymerization by binding a small hydrophobic pocket near the RT active site and inducing an allosteric change in this region. Classical NRTIs are abacavir, adefovir (PMEA), didanosine (ddI), lamivudine (3TC), stavudine (d4T), tenofovir (PMPA), zalcitabine (ddC), and zidovudine (AZT). Classical NNRTIs are atevirdine (BHAP U-87201E), delavirdine, efavirenz (DMP-266), emivirine (I-EBU), and nevirapine (BI-RG-587). The tritherapies used as a basic effective treatment of AIDS associate two NRTIs and one NNRTI. Use of protease inhibitors in tritherapy regimens permit more ambitious therapeutic strategies. In terms of biological role, gag-Pol polyprotein and Gag polyprotein may regulate their own translation, by the binding genomic RNA in the 5'-UTR. At low concentration, Gag-Pol and Gag would promote translation, whereas at high concentration, the polyproteins encapsidate genomic RNA and then shut off translation. Its function is as follows. Matrix protein p17 has two main functions: in infected cell, it targets Gag and Gag-pol polyproteins to the plasma membrane via a multipartite membrane-binding signal, that includes its myristointegration complex. The myristoylation signal and the NLS exert conflicting influences its subcellular localization. The key regulation of these motifs might be phosphorylation of a portion of MA molecules on the C-terminal tyrosine at the time of virus maturation, by virion-associated cellular tyrosine kinase. Implicated in the release from host cell mediated by Vpu. Capsid protein p24 forms the conical core that encapsulates the genomic RNA-nucleocapsid complex in the virion. The core is constituted by capsid protein hexamer subunits. The core is disassembled soon after virion entry. Interaction with host PPIA/CYPA protects the virus from restriction by host TRIM5-alpha and from an unknown antiviral activity in host cells. This capsid restriction by TRIM5 is one of the factors which restricts SIV to the simian species. Functionally, nucleocapsid protein p7 encapsulates and protects viral dimeric unspliced (genomic) RNA. Binds these RNAs through its zinc fingers. Facilitates rearangement of nucleic acid secondary structure during retrotranscription of genomic RNA. This capability is referred to as nucleic acid chaperone activity. In terms of biological role, the aspartyl protease mediates proteolytic cleavages of Gag and Gag-Pol polyproteins during or shortly after the release of the virion from the plasma membrane. Cleavages take place as an ordered, step-wise cascade to yield mature proteins. This process is called maturation. Displays maximal activity during the budding process just prior to particle release from the cell. Also cleaves Nef and Vif, probably concomitantly with viral structural proteins on maturation of virus particles. Hydrolyzes host EIF4GI and PABP1 in order to shut off the capped cellular mRNA translation. The resulting inhibition of cellular protein synthesis serves to ensure maximal viral gene expression and to evade host immune response. Its function is as follows. Reverse transcriptase/ribonuclease H (RT) is a multifunctional enzyme that converts the viral dimeric RNA genome into dsDNA in the cytoplasm, shortly after virus entry into the cell. This enzyme displays a DNA polymerase activity that can copy either DNA or RNA templates, and a ribonuclease H (RNase H) activity that cleaves the RNA strand of RNA-DNA heteroduplexes in a partially processive 3' to 5' endonucleasic mode. Conversion of viral genomic RNA into dsDNA requires many steps. A tRNA binds to the primer-binding site (PBS) situated at the 5'-end of the viral RNA. RT uses the 3' end of the tRNA primer to perform a short round of RNA-dependent minus-strand DNA synthesis. The reading proceeds through the U5 region and ends after the repeated (R) region which is present at both ends of viral RNA. The portion of the RNA-DNA heteroduplex is digested by the RNase H, resulting in a ssDNA product attached to the tRNA primer. This ssDNA/tRNA hybridizes with the identical R region situated at the 3' end of viral RNA. This template exchange, known as minus-strand DNA strong stop transfer, can be either intra- or intermolecular. RT uses the 3' end of this newly synthesized short ssDNA to perform the RNA-dependent minus-strand DNA synthesis of the whole template. RNase H digests the RNA template except for two polypurine tracts (PPTs) situated at the 5'-end and near the center of the genome. It is not clear if both polymerase and RNase H activities are simultaneous. RNase H can probably proceed both in a polymerase-dependent (RNA cut into small fragments by the same RT performing DNA synthesis) and a polymerase-independent mode (cleavage of remaining RNA fragments by free RTs). Secondly, RT performs DNA-directed plus-strand DNA synthesis using the PPTs that have not been removed by RNase H as primers. PPTs and tRNA primers are then removed by RNase H. The 3' and 5' ssDNA PBS regions hybridize to form a circular dsDNA intermediate. Strand displacement synthesis by RT to the PBS and PPT ends produces a blunt ended, linear dsDNA copy of the viral genome that includes long terminal repeats (LTRs) at both ends. Integrase catalyzes viral DNA integration into the host chromosome, by performing a series of DNA cutting and joining reactions. This enzyme activity takes place after virion entry into a cell and reverse transcription of the RNA genome in dsDNA. The first step in the integration process is 3' processing. This step requires a complex comprising the viral genome, matrix protein, Vpr and integrase. This complex is called the pre-integration complex (PIC). The integrase protein removes 2 nucleotides from each 3' end of the viral DNA, leaving recessed CA OH's at the 3' ends. In the second step, the PIC enters cell nucleus. This process is mediated through integrase and Vpr proteins, and allows the virus to infect a non dividing cell. This ability to enter the nucleus is specific of lentiviruses, other retroviruses cannot and rely on cell division to access cell chromosomes. In the third step, termed strand transfer, the integrase protein joins the previously processed 3' ends to the 5' ends of strands of target cellular DNA at the site of integration. The 5'-ends are produced by integrase-catalyzed staggered cuts, 5 bp apart. A Y-shaped, gapped, recombination intermediate results, with the 5'-ends of the viral DNA strands and the 3' ends of target DNA strands remaining unjoined, flanking a gap of 5 bp. The last step is viral DNA integration into host chromosome. This involves host DNA repair synthesis in which the 5 bp gaps between the unjoined strands are filled in and then ligated. Since this process occurs at both cuts flanking the SIV genome, a 5 bp duplication of host DNA is produced at the ends of SIV integration. Alternatively, Integrase may catalyze the excision of viral DNA just after strand transfer, this is termed disintegration. This Cercopithecidae (Old World monkeys) protein is Gag-Pol polyprotein (gag-pol).